The following is a 435-amino-acid chain: D-amino acid dehydrogenase (435 aa).

FAD is bound at residue 3 to 17 (VLILGSGVIGTTSAW).

The protein belongs to the DadA oxidoreductase family. Requires FAD as cofactor.

It carries out the reaction a D-alpha-amino acid + A + H2O = a 2-oxocarboxylate + AH2 + NH4(+). It participates in amino-acid degradation; D-alanine degradation; NH(3) and pyruvate from D-alanine: step 1/1. Oxidative deamination of D-amino acids. The polypeptide is D-amino acid dehydrogenase (Xylella fastidiosa (strain 9a5c)).